The chain runs to 448 residues: MNSPSLPAVERLDVQAFINAQPLSPYQWRIVLLCFLIVFLDGLDTAAMGFIAPALTQDWGIDRASLGPVMSAALIGMVFGALGSGPLADRYGRKLVLVAAVFLFGLFSLASAYSTNVEQLLALRFLTGLGLGAAMPNATTLLSEYTPERLKSLLVTSMFCGFNLGMACGGFVSAKLIPLFGWHSLLLLGGLLPLVLAVVLLFRLPESARYLVVRNRGSERVRQVLAPIAPAQVALARSFHVPEQQTVQARNVFAVIFSGTYSAGTLLLWLTYFMGLVIVYLLTSWLPTLMRDSGASLEQAAFIGALFQFGGVLSAVAVGWAMDRFNPHKVIGLFYLLAGVFAWCVGQSLGQVTLLATLVLLAGMCINGAQSAMPSLAARFYPTQGRATGVSWMLGIGRFGAILGAWIGATLLGLGWNFEQVLTALVLPAALATAAVLLKGLVSHADAG.

The Cytoplasmic segment spans residues 1–30 (MNSPSLPAVERLDVQAFINAQPLSPYQWRI). The chain crosses the membrane as a helical span at residues 31–51 (VLLCFLIVFLDGLDTAAMGFI). Topologically, residues 52–67 (APALTQDWGIDRASLG) are periplasmic. Residues 68–88 (PVMSAALIGMVFGALGSGPLA) traverse the membrane as a helical segment. Residues 89-94 (DRYGRK) lie on the Cytoplasmic side of the membrane. A helical membrane pass occupies residues 95–115 (LVLVAAVFLFGLFSLASAYST). Topologically, residues 116 to 119 (NVEQ) are periplasmic. A helical transmembrane segment spans residues 120–140 (LLALRFLTGLGLGAAMPNATT). The Cytoplasmic segment spans residues 141-152 (LLSEYTPERLKS). The helical transmembrane segment at 153 to 173 (LLVTSMFCGFNLGMACGGFVS) threads the bilayer. At 174–184 (AKLIPLFGWHS) the chain is on the periplasmic side. A helical membrane pass occupies residues 185-205 (LLLLGGLLPLVLAVVLLFRLP). The Cytoplasmic portion of the chain corresponds to 206–261 (ESARYLVVRNRGSERVRQVLAPIAPAQVALARSFHVPEQQTVQARNVFAVIFSGTY). Residues 262–282 (SAGTLLLWLTYFMGLVIVYLL) form a helical membrane-spanning segment. The Periplasmic portion of the chain corresponds to 283 to 301 (TSWLPTLMRDSGASLEQAA). A helical transmembrane segment spans residues 302–322 (FIGALFQFGGVLSAVAVGWAM). The Cytoplasmic segment spans residues 323-329 (DRFNPHK). Residues 330–350 (VIGLFYLLAGVFAWCVGQSLG) form a helical membrane-spanning segment. A topological domain (periplasmic) is located at residue Q351. The chain crosses the membrane as a helical span at residues 352–372 (VTLLATLVLLAGMCINGAQSA). Topologically, residues 373 to 398 (MPSLAARFYPTQGRATGVSWMLGIGR) are cytoplasmic. Residues 399 to 419 (FGAILGAWIGATLLGLGWNFE) form a helical membrane-spanning segment. Residues 420–421 (QV) are Periplasmic-facing. Residues 422 to 442 (LTALVLPAALATAAVLLKGLV) traverse the membrane as a helical segment. The Cytoplasmic portion of the chain corresponds to 443–448 (SHADAG).

Belongs to the major facilitator superfamily. Aromatic acid:H(+) symporter (AAHS) (TC 2.A.1.15) family.

Its subcellular location is the cell inner membrane. Its function is as follows. Transports 4-hydroxybenzoate (4-HBA) and protocatechuate across the membrane. Driven by the proton motive force. Also functions as a chemoreceptor, which is required for chemotaxis to aromatic acids. This Pseudomonas aeruginosa (strain ATCC 15692 / DSM 22644 / CIP 104116 / JCM 14847 / LMG 12228 / 1C / PRS 101 / PAO1) protein is 4-hydroxybenzoate transporter PcaK (pcaK).